We begin with the raw amino-acid sequence, 808 residues long: Na(+)/H(+) antiporter 2 (808 aa).

The next 9 helical transmembrane spans lie at 12 to 32 (HVAYSCVGIFSSIFSLVSLFV), 36 to 56 (LYIGESMVASIFGLIVGPHCL), 70 to 90 (ITLEISRILLCLQVFAVSVEL), 105 to 125 (LLVPVMTSGWLVIALFVWILV), 128 to 148 (LNFPASLLMGACITATDPVLA), 174 to 194 (CNDGLAIPFVFLSLDLLLYPG), 203 to 223 (WICVTILWECIFGSILGCIIG), 244 to 264 (FLAFYLILALTCAGFGSMLGV), and 267 to 287 (LLVSFFAGTAFAWDGWFAAKT). Asn291 is a glycosylation site (N-linked (GlcNAc...) asparagine). A run of 5 helical transmembrane segments spans residues 294–314 (NVIDVLLNYAYFVYLGSILPW), 319–339 (NPDIGLDVWRLILLSLVVIFL), 361–381 (AMFIGHFGPIGVGAVFAAITS), 409–429 (VMACIWPITCFSIMTSVIVHG), and 432–452 (VAVIMLGRYLSTVTLMALPTG). Disordered stretches follow at residues 478–499 (QRLDKEPSLSPGQIGGRTSGMV) and 541–562 (HASTNDSHGTTTANLGTSNGRA). Residues 542 to 561 (ASTNDSHGTTTANLGTSNGR) are compositionally biased toward polar residues. N-linked (GlcNAc...) asparagine glycosylation is found at Asn545 and Asn602. The tract at residues 774–808 (LHSEDEMADDEAESENDMDYEDSDGPASRFKDHAD) is disordered. Positions 779 to 797 (EMADDEAESENDMDYEDSD) are enriched in acidic residues.

The protein belongs to the fungal Na(+)/H(+) exchanger family.

Its subcellular location is the membrane. Its function is as follows. Sodium export from cell, takes up external protons in exchange for internal sodium ions. Seems to be poorly expressed. This is Na(+)/H(+) antiporter 2 (SOD22) from Zygosaccharomyces rouxii.